Consider the following 488-residue polypeptide: Monothiol glutaredoxin-S17 (488 aa).

The Thioredoxin domain maps to 2–107; it reads SGTVKDIVSK…LANKVGKVAG (106 aa). Glutaredoxin domains follow at residues 154–256, 284–386, and 391–488; these read KSRL…GITT, RARL…GITG, and EDRL…TLSE. Residue lysine 408 coordinates glutathione. [2Fe-2S] cluster is bound at residue cysteine 416. Residues arginine 445, phenylalanine 457, and 470 to 471 each bind glutathione; that span reads CD.

The protein belongs to the glutaredoxin family. CGFS subfamily. As to quaternary structure, [2Fe-2S]-bridged holo-homodimer. Interacts in vitro with SUFE1, BOLA1, BOLA2 and BOLA4. Interacts in vivo only with BOLA2. Interacts with RGLG3 and RGLG4. Post-translationally, ubiquitinated at Lys-154. Polyubiquitinated by RGLG3 and RGLG4. Polyubiquitination of GRXS17 leads to its degradation by the proteasome.

The protein localises to the cytoplasm. Its function is as follows. May only reduce GSH-thiol disulfides, but not protein disulfides. Participates probably to the maturation of iron-sulfur proteins and to the regulation of the redox state of the BOLA proteins. The GRXS17-BOLA2 heterodimer binds a labile, oxygen sensitive iron-sulfur cluster. In Arabidopsis thaliana (Mouse-ear cress), this protein is Monothiol glutaredoxin-S17.